Reading from the N-terminus, the 396-residue chain is 1-deoxy-D-xylulose 5-phosphate reductoisomerase (396 aa).

Residues Thr10, Gly11, Ser12, Ile13, Gly36, Lys37, Asn38, and Asn124 each contribute to the NADPH site. Lys125 provides a ligand contact to 1-deoxy-D-xylulose 5-phosphate. NADPH is bound at residue Glu126. A Mn(2+)-binding site is contributed by Asp150. 4 residues coordinate 1-deoxy-D-xylulose 5-phosphate: Ser151, Glu152, Ser186, and His209. Glu152 provides a ligand contact to Mn(2+). Residue Gly215 coordinates NADPH. The 1-deoxy-D-xylulose 5-phosphate site is built by Ser222, Asn227, Lys228, and Glu231. Glu231 is a binding site for Mn(2+).

The protein belongs to the DXR family. Requires Mg(2+) as cofactor. The cofactor is Mn(2+).

The catalysed reaction is 2-C-methyl-D-erythritol 4-phosphate + NADP(+) = 1-deoxy-D-xylulose 5-phosphate + NADPH + H(+). It participates in isoprenoid biosynthesis; isopentenyl diphosphate biosynthesis via DXP pathway; isopentenyl diphosphate from 1-deoxy-D-xylulose 5-phosphate: step 1/6. Catalyzes the NADPH-dependent rearrangement and reduction of 1-deoxy-D-xylulose-5-phosphate (DXP) to 2-C-methyl-D-erythritol 4-phosphate (MEP). In Glaesserella parasuis serovar 5 (strain SH0165) (Haemophilus parasuis), this protein is 1-deoxy-D-xylulose 5-phosphate reductoisomerase.